A 199-amino-acid chain; its full sequence is Glycerol-3-phosphate acyltransferase (199 aa).

Helical transmembrane passes span 4-24, 51-71, 77-97, 111-131, and 152-172; these read LVSV…FLMG, WAAL…AYLG, EWGF…PVWL, VMLL…ALAV, and LFLL…AVVI.

It belongs to the PlsY family. Probably interacts with PlsX.

The protein resides in the cell membrane. It carries out the reaction an acyl phosphate + sn-glycerol 3-phosphate = a 1-acyl-sn-glycero-3-phosphate + phosphate. Its pathway is lipid metabolism; phospholipid metabolism. Its function is as follows. Catalyzes the transfer of an acyl group from acyl-phosphate (acyl-PO(4)) to glycerol-3-phosphate (G3P) to form lysophosphatidic acid (LPA). This enzyme utilizes acyl-phosphate as fatty acyl donor, but not acyl-CoA or acyl-ACP. The sequence is that of Glycerol-3-phosphate acyltransferase from Symbiobacterium thermophilum (strain DSM 24528 / JCM 14929 / IAM 14863 / T).